The primary structure comprises 156 residues: Ribosomal RNA large subunit methyltransferase H (156 aa).

Residues Leu73, Gly104, and 123–128 (LSDLTL) each bind S-adenosyl-L-methionine.

The protein belongs to the RNA methyltransferase RlmH family. Homodimer.

The protein resides in the cytoplasm. It catalyses the reaction pseudouridine(1915) in 23S rRNA + S-adenosyl-L-methionine = N(3)-methylpseudouridine(1915) in 23S rRNA + S-adenosyl-L-homocysteine + H(+). Specifically methylates the pseudouridine at position 1915 (m3Psi1915) in 23S rRNA. This chain is Ribosomal RNA large subunit methyltransferase H, found in Methylibium petroleiphilum (strain ATCC BAA-1232 / LMG 22953 / PM1).